The primary structure comprises 198 residues: Glycerol-3-phosphate acyltransferase (198 aa).

5 consecutive transmembrane segments (helical) span residues 5–25, 56–76, 84–104, 114–134, and 158–178; these read LILL…LWIG, SIVT…PFFF, FWLL…FAGF, AGVI…VFLV, and LFMG…FVIW.

The protein belongs to the PlsY family. In terms of assembly, probably interacts with PlsX.

It localises to the cell membrane. It carries out the reaction an acyl phosphate + sn-glycerol 3-phosphate = a 1-acyl-sn-glycero-3-phosphate + phosphate. The protein operates within lipid metabolism; phospholipid metabolism. Catalyzes the transfer of an acyl group from acyl-phosphate (acyl-PO(4)) to glycerol-3-phosphate (G3P) to form lysophosphatidic acid (LPA). This enzyme utilizes acyl-phosphate as fatty acyl donor, but not acyl-CoA or acyl-ACP. This Listeria monocytogenes serotype 4b (strain CLIP80459) protein is Glycerol-3-phosphate acyltransferase.